The chain runs to 432 residues: GTPase Obg (432 aa).

The Obg domain occupies 1–158 (MFVDQVKIYV…RNIILELKLL (158 aa)). In terms of domain architecture, OBG-type G spans 159–329 (ADVGLVGFPS…LLFAIADLLE (171 aa)). GTP-binding positions include 165 to 172 (GFPSVGKS), 190 to 194 (FTTLV), 212 to 215 (DLPG), 282 to 285 (NKMD), and 310 to 312 (SAA). Residues serine 172 and threonine 192 each coordinate Mg(2+). One can recognise an OCT domain in the interval 350–428 (KYEKEEPPFT…LLDYEFEFVD (79 aa)).

It belongs to the TRAFAC class OBG-HflX-like GTPase superfamily. OBG GTPase family. In terms of assembly, monomer. It depends on Mg(2+) as a cofactor.

The protein resides in the cytoplasm. An essential GTPase which binds GTP, GDP and possibly (p)ppGpp with moderate affinity, with high nucleotide exchange rates and a fairly low GTP hydrolysis rate. Plays a role in control of the cell cycle, stress response, ribosome biogenesis and in those bacteria that undergo differentiation, in morphogenesis control. This is GTPase Obg from Geobacillus kaustophilus (strain HTA426).